The sequence spans 412 residues: Orcinol synthase (412 aa).

Residues Cys-164, His-322, and Asn-355 contribute to the active site.

Belongs to the thiolase-like superfamily. Chalcone/stilbene synthases family. As to quaternary structure, homodimer. Mainly expressed in young leaves, and barely in mature leaves and twigs.

It carries out the reaction 3 malonyl-CoA + acetyl-CoA + 3 H(+) = orcinol + 4 CO2 + 4 CoA. The catalysed reaction is 3 malonyl-CoA + acetyl-CoA + 2 H(+) = orsellinate + 3 CO2 + 4 CoA. The enzyme catalyses 3 malonyl-CoA + acetyl-CoA + 3 H(+) = tetraacetate lactone + 3 CO2 + 4 CoA. It catalyses the reaction 2 malonyl-CoA + acetyl-CoA + 2 H(+) = triacetate lactone + 2 CO2 + 3 CoA. It carries out the reaction 3 malonyl-CoA + acetyl-CoA + 3 H(+) = 2-acetylphloroglucinol + 3 CO2 + 4 CoA. It participates in secondary metabolite biosynthesis; terpenoid biosynthesis. In terms of biological role, involved in the biosynthesis of acetate-derived aromatic tetraketides natural products, precursors of daurichromenic acid, an anti-human immunodeficiency viruses (HIV) meroterpenoid consisting of sesquiterpene and orsellinic acid (OSA) moieties. Accepts acetyl-CoA as starter substrate and produces orcinol as the major reaction product, along with four minor products including OSA, tetraacetate lactone, triacetate lactone and 2-acetylphloroglucinol. The protein is Orcinol synthase of Rhododendron dauricum (Azalea daurica).